Here is a 234-residue protein sequence, read N- to C-terminus: Orotidine 5'-phosphate decarboxylase (234 aa).

Substrate-binding positions include Asp-11, Lys-33, 60–69, Thr-120, Arg-181, Gln-190, Gly-210, and Arg-211; that span reads DLKFHDIPNT. Lys-62 acts as the Proton donor in catalysis.

It belongs to the OMP decarboxylase family. Type 1 subfamily. Homodimer.

It carries out the reaction orotidine 5'-phosphate + H(+) = UMP + CO2. Its pathway is pyrimidine metabolism; UMP biosynthesis via de novo pathway; UMP from orotate: step 2/2. Functionally, catalyzes the decarboxylation of orotidine 5'-monophosphate (OMP) to uridine 5'-monophosphate (UMP). This chain is Orotidine 5'-phosphate decarboxylase, found in Aliivibrio salmonicida (strain LFI1238) (Vibrio salmonicida (strain LFI1238)).